Reading from the N-terminus, the 1549-residue chain is FERM and PDZ domain-containing protein 1 (1549 aa).

The region spanning 57 to 135 (TVTLDKDVLL…ALSITVVRCT (79 aa)) is the PDZ domain. Residues 181 to 496 (NVLKVYLENG…GYYRLFVDPA (316 aa)) form the FERM domain. Disordered stretches follow at residues 554 to 618 (AREE…DDLD), 717 to 738 (SHLS…PPQW), 775 to 834 (YDAA…YAKS), 913 to 1046 (STNP…RSEI), 1097 to 1174 (SLDS…EAQE), 1231 to 1257 (LSPC…DDSP), and 1321 to 1347 (PETE…AGSQ). A compositionally biased stretch (polar residues) spans 717–730 (SHLSDSGSESTASR). The tract at residues 924-931 (EPETMETK) is important for interaction with GPSM2. Over residues 950–961 (PSNTENPVTTDG) the composition is skewed to polar residues. A compositionally biased stretch (low complexity) spans 962–980 (SSASIPHSPHHSNPGSSSP). The span at 1117–1130 (SGKDLGDSKGDRLD) shows a compositional bias: basic and acidic residues.

Interacts with GPSM1. Interacts with GPSM2.

It is found in the cytoplasm. It localises to the cytosol. The protein localises to the cell membrane. In terms of biological role, stabilizes membrane-bound GPSM1, and thereby promotes its interaction with GNAI1. This chain is FERM and PDZ domain-containing protein 1 (Frmpd1), found in Mus musculus (Mouse).